Reading from the N-terminus, the 859-residue chain is Cation/H(+) antiporter 24 (859 aa).

The next 12 helical transmembrane spans lie at 64–84, 92–112, 122–142, 161–181, 194–214, 227–247, 258–278, 291–311, 312–332, 348–368, 384–404, and 438–458; these read AFST…VVSI, PRIV…FGGI, PIAN…FLFL, YIAA…GMAM, SIGG…YTVL, FAMS…VIFE, YSVF…LLVV, EGTL…LASC, FLTD…GLLV, TFIY…GTNI, FYMT…AALF, and IVGF…TAVT. The tract at residues 538-566 is disordered; that stretch reads IDHEQRKEEEEEEYEEEEEEPERKQSGRI. Acidic residues predominate over residues 546–557; the sequence is EEEEEYEEEEEE. Ser-857 carries the phosphoserine modification.

Belongs to the monovalent cation:proton antiporter 2 (CPA2) transporter (TC 2.A.37) family. CHX (TC 2.A.37.4) subfamily. In terms of tissue distribution, specifically expressed in pollen.

Its subcellular location is the membrane. Its function is as follows. May operate as a cation/H(+) antiporter. The polypeptide is Cation/H(+) antiporter 24 (CHX24) (Arabidopsis thaliana (Mouse-ear cress)).